Reading from the N-terminus, the 749-residue chain is MSFIDPYQHIIVEHQYSHKFTVVVLRATKVTKGAFGDMLDTPDPYVELFISSTPDSRKRTRHFNNNINPVWNETFEFILDPNQENVLEITLMDANYVMDETLGTATFTLSSMKVGEKKEVPFIFNQVTEMILEMSLEVCSCPDLRFSMALCDQEKTFRQQRKENIKENMKKLLGPKKSEGLYSTRDVPVVAILGSGGGFRAMVGFSGVMKALYESGILDCATYLAGLSGSSWYMSTLYSHPDFPEKGPEEINKELMKNVSYDPLLLLTPQKIKRYVESLWKKKSSGQPVTFTDIFGMLIGETLIHNRMNTTLSSLKEKVNTAQCPLPLFTCLHVKPDVSELMFADWVEFSPYEIGMAKYGTFMAPDLFGSKFFMGTVVKKYEENPLHFLMGVWGSAFSILFNRVLGVSGSQNKGSTMEEELENITAKHIVSNDSSDSDDESQEPKGTENEDAERDYQNDNQASWVHRMLMALVSDSALFNTREGRAGKVHNFMLGLNLNTSYPLSPLRNFTTQESLDDDELDAAVADPDEFERIYEPLDVKSKKIHVVDSGLTFNLPYPLILRPQRGVDLIISFDFSARPSDSSPPFKELLLAEKWAKMNKLPFPKIDPYVFDREGLKECYVFKPKNPDVEKDCPTIIHFVLANINFRKYKAPGVPRETKEEKEIADFDIFDDPESPFSTFNFQYPNQAFKRLHDLMHFNTLNNIDVIKNAMVESIEYRRQNPSRCSVSLSNVEARRFFNKEFLNKPTA.

A phospholipid binding region spans residues 1 to 178 (MSFIDPYQHI…MKKLLGPKKS (178 aa)). The residue at position 2 (serine 2) is a Phosphoserine. The 117-residue stretch at 6 to 122 (PYQHIIVEHQ…KVGEKKEVPF (117 aa)) folds into the C2 domain. Residues aspartate 40, threonine 41, aspartate 43, asparagine 65, aspartate 93, alanine 94, and asparagine 95 each contribute to the Ca(2+) site. Positions 140–740 (SCPDLRFSMA…SNVEARRFFN (601 aa)) constitute a PLA2c domain. The Nucleophile role is filled by serine 228. Phosphothreonine is present on threonine 268. Residues 427-456 (KHIVSNDSSDSDDESQEPKGTENEDAERDY) are disordered. Phosphoserine is present on residues serine 434, serine 435, and serine 437. Serine 505 bears the Phosphoserine; by MAPK mark. Phosphoserine is present on serine 515. A Glycyl lysine isopeptide (Lys-Gly) (interchain with G-Cter in SUMO2) cross-link involves residue lysine 541. The active-site Proton acceptor is the aspartate 549. A Glycyl lysine isopeptide (Lys-Gly) (interchain with G-Cter in SUMO2) cross-link involves residue lysine 606. Phosphoserine is present on residues serine 727 and serine 729.

As to quaternary structure, interacts with KAT5. In terms of processing, phosphorylated at both Ser-505 and Ser-727 in response to mitogenic stimuli.

The protein localises to the cytoplasm. It is found in the golgi apparatus membrane. It localises to the nucleus envelope. The catalysed reaction is a 1,2-diacyl-sn-glycero-3-phosphocholine + H2O = a 1-acyl-sn-glycero-3-phosphocholine + a fatty acid + H(+). It catalyses the reaction a 1-O-alkyl-2-acyl-sn-glycero-3-phosphocholine + H2O = a 1-O-alkyl-sn-glycero-3-phosphocholine + a fatty acid + H(+). It carries out the reaction a 1-acyl-sn-glycero-3-phosphocholine + H2O = sn-glycerol 3-phosphocholine + a fatty acid + H(+). The enzyme catalyses 1-hexadecanoyl-2-(5Z,8Z,11Z,14Z-eicosatetraenoyl)-sn-glycero-3-phosphocholine + H2O = 1-hexadecanoyl-sn-glycero-3-phosphocholine + (5Z,8Z,11Z,14Z)-eicosatetraenoate + H(+). The catalysed reaction is 1,2-di-(5Z,8Z,11Z,14Z-eicosatetraenoyl)-sn-glycero-3-phosphocholine + H2O = 1-(5Z,8Z,11Z,14Z-eicosatetraenoyl)-sn-glycero-3-phosphocholine + (5Z,8Z,11Z,14Z)-eicosatetraenoate + H(+). It catalyses the reaction 1-octadecanoyl-2-(5Z,8Z,11Z,14Z-eicosatetraenoyl)-sn-glycero-3-phosphocholine + H2O = 1-octadecanoyl-sn-glycero-3-phosphocholine + (5Z,8Z,11Z,14Z)-eicosatetraenoate + H(+). It carries out the reaction 1-hexadecanoyl-2-(9Z,12Z-octadecadienoyl)-sn-glycero-3-phosphocholine + H2O = (9Z,12Z)-octadecadienoate + 1-hexadecanoyl-sn-glycero-3-phosphocholine + H(+). The enzyme catalyses 1-octadecanoyl-2-(9Z,12Z,15Z-octadecatrienoyl)-sn-glycero-3-phosphocholine + H2O = (9Z,12Z,15Z)-octadecatrienoate + 1-octadecanoyl-sn-glycero-3-phosphocholine + H(+). The catalysed reaction is 1-(5Z,8Z,11Z,14Z-eicosatetraenoyl)-2-hexadecanoyl-sn-glycero-3-phosphocholine + H2O = 1-(5Z,8Z,11Z,14Z-eicosatetraenoyl)-sn-glycero-3-phosphocholine + hexadecanoate + H(+). It catalyses the reaction 1-O-hexadecyl-2-(5Z,8Z,11Z,14Z)-eicosatetraenoyl-sn-glycero-3-phosphocholine + H2O = 1-O-hexadecyl-sn-glycero-3-phosphocholine + (5Z,8Z,11Z,14Z)-eicosatetraenoate + H(+). It carries out the reaction 1,2-di-(9Z-octadecenoyl)-sn-glycero-3-phospho-(1'-sn-glycerol) + H2O = 1-(9Z-octadecenoyl)-sn-glycero-3-phospho-(1'-sn-glycerol) + (9Z)-octadecenoate + H(+). The enzyme catalyses 1-octadecanoyl-2-(5Z,8Z,11Z,14Z-eicosatetraenoyl)-sn-glycero-3-phosphate + H2O = 1-octadecanoyl-sn-glycero-3-phosphate + (5Z,8Z,11Z,14Z)-eicosatetraenoate + H(+). The catalysed reaction is 1-hexadecanoyl-sn-glycero-3-phosphocholine + H2O = sn-glycerol 3-phosphocholine + hexadecanoate + H(+). It catalyses the reaction 2-(prostaglandin E2)-sn-glycero-3-phosphoethanolamine + H2O = sn-glycero-3-phosphoethanolamine + prostaglandin E2 + H(+). It carries out the reaction 2-[(15S)-hydroxy-(5Z,8Z,11Z,13E)-eicosatetraenoyl]-sn-glycero-3-phosphocholine + H2O = (15S)-hydroxy-(5Z,8Z,11Z,13E)-eicosatetraenoate + sn-glycerol 3-phosphocholine + H(+). The enzyme catalyses 2-[(15R)-hydroxy-(5Z,8Z,11Z,13E)-eicosatetraenoyl]-sn-glycero-3-phosphocholine + H2O = (15R)-hydroxy-(5Z,8Z,11Z,13E)-eicosatetraenoate + sn-glycerol 3-phosphocholine + H(+). The catalysed reaction is 2-(prostaglandin E2)-sn-glycero-3-phosphocholine + H2O = prostaglandin E2 + sn-glycerol 3-phosphocholine + H(+). It catalyses the reaction 2-[(11R)-hydroxy-(5Z,8Z,12E,14Z)-eicosatetraenoyl]-sn-glycero-3-phosphocholine + H2O = (11R)-hydroxy-(5Z,8Z,12E,14Z)-eicosatetraenoate + sn-glycerol 3-phosphocholine + H(+). It carries out the reaction 1-(5Z,8Z,11Z,14Z-eicosatetraenoyl)-2-O-hexadecyl-sn-glycero-3-phosphocholine + H2O = 2-O-hexadecyl-sn-glycero-3-phosphocholine + (5Z,8Z,11Z,14Z)-eicosatetraenoate + H(+). The enzyme catalyses 1-octadecanoyl-2-(5Z,8Z,11Z,14Z-eicosatetraenoyl)-sn-glycero-3-phosphocholine + glycerol = 1-(5Z,8Z,11Z,14Z-eicosatetraenoyl)-glycerol + 1-octadecanoyl-sn-glycero-3-phosphocholine. The catalysed reaction is 1-octadecanoyl-2-(9Z,12Z,15Z-octadecatrienoyl)-sn-glycero-3-phosphocholine + glycerol = 1-(9Z,12Z,15Z-octadecatrienoyl)-glycerol + 1-octadecanoyl-sn-glycero-3-phosphocholine. It participates in membrane lipid metabolism; glycerophospholipid metabolism. Its pathway is lipid metabolism; arachidonate metabolism. The protein operates within lipid metabolism; prostaglandin biosynthesis. It functions in the pathway lipid metabolism; leukotriene B4 biosynthesis. Its activity is regulated as follows. Activated by cytosolic calcium, which is necessary for binding to membrane lipids. Activated by phosphorylation in response to mitogenic stimuli. Functionally, has primarily calcium-dependent phospholipase and lysophospholipase activities, with a major role in membrane lipid remodeling and biosynthesis of lipid mediators of the inflammatory response. Plays an important role in embryo implantation and parturition through its ability to trigger prostanoid production. Preferentially hydrolyzes the ester bond of the fatty acyl group attached at sn-2 position of phospholipids (phospholipase A2 activity). Selectively hydrolyzes sn-2 arachidonoyl group from membrane phospholipids, providing the precursor for eicosanoid biosynthesis via the cyclooxygenase pathway. In an alternative pathway of eicosanoid biosynthesis, hydrolyzes sn-2 fatty acyl chain of eicosanoid lysophopholipids to release free bioactive eicosanoids. Hydrolyzes the ester bond of the fatty acyl group attached at sn-1 position of phospholipids (phospholipase A1 activity) only if an ether linkage rather than an ester linkage is present at the sn-2 position. This hydrolysis is not stereospecific. Has calcium-independent phospholipase A2 and lysophospholipase activities in the presence of phosphoinositides. Has O-acyltransferase activity. Catalyzes the transfer of fatty acyl chains from phospholipids to a primary hydroxyl group of glycerol (sn-1 or sn-3), potentially contributing to monoacylglycerol synthesis. The protein is Cytosolic phospholipase A2 (PLA2G4A) of Equus caballus (Horse).